Consider the following 196-residue polypeptide: Adenylate kinase (196 aa).

9–17 (GIPGVGKST) is a binding site for ATP.

It belongs to the archaeal adenylate kinase family.

The protein resides in the cytoplasm. It catalyses the reaction AMP + ATP = 2 ADP. This chain is Adenylate kinase, found in Thermococcus sibiricus (strain DSM 12597 / MM 739).